A 614-amino-acid chain; its full sequence is 1-deoxy-D-xylulose-5-phosphate synthase (614 aa).

Residues H74 and 115-117 (AHS) each bind thiamine diphosphate. D146 contacts Mg(2+). Thiamine diphosphate-binding positions include 147 to 148 (GA), N175, Y282, and E363. Residue N175 coordinates Mg(2+).

The protein belongs to the transketolase family. DXPS subfamily. Homodimer. It depends on Mg(2+) as a cofactor. The cofactor is thiamine diphosphate.

It catalyses the reaction D-glyceraldehyde 3-phosphate + pyruvate + H(+) = 1-deoxy-D-xylulose 5-phosphate + CO2. It functions in the pathway metabolic intermediate biosynthesis; 1-deoxy-D-xylulose 5-phosphate biosynthesis; 1-deoxy-D-xylulose 5-phosphate from D-glyceraldehyde 3-phosphate and pyruvate: step 1/1. In terms of biological role, catalyzes the acyloin condensation reaction between C atoms 2 and 3 of pyruvate and glyceraldehyde 3-phosphate to yield 1-deoxy-D-xylulose-5-phosphate (DXP). This chain is 1-deoxy-D-xylulose-5-phosphate synthase, found in Nitrosomonas eutropha (strain DSM 101675 / C91 / Nm57).